The sequence spans 354 residues: Rhodopsin (354 aa).

Topologically, residues 1–36 (MNGTEGENFYVPMSNKTGVVRNPFEYPQYYLADHWM) are extracellular. N-linked (GlcNAc...) asparagine glycans are attached at residues Asn-2 and Asn-15. Residues 37–61 (FAVLAAYMFFLIITGFPVNFLTLFV) form a helical membrane-spanning segment. At 62–73 (TIQNKKLRQPLN) the chain is on the cytoplasmic side. A helical transmembrane segment spans residues 74 to 96 (YILLNLAVANLFMVFGGFTTTLI). The Extracellular portion of the chain corresponds to 97–110 (TSMNGYFVFGSTGC). A disulfide bridge links Cys-110 with Cys-187. The helical transmembrane segment at 111-133 (NLEGFFATLGGEISLWSLVVLAI) threads the bilayer. The 'Ionic lock' involved in activated form stabilization signature appears at 134 to 136 (ERY). The Cytoplasmic segment spans residues 134 to 152 (ERYVVVCKPMSNFRFGSQH). A helical transmembrane segment spans residues 153–173 (AIAGVSLTWVMAMACAAPPLV). Residues 174 to 202 (GWSRYIPEGLQCSCGIDYYTPKPEINNVS) lie on the Extracellular side of the membrane. A glycan (N-linked (GlcNAc...) asparagine) is linked at Asn-200. Residues 203 to 224 (FVIYMFVVHFSIPLTIIFFCYG) form a helical membrane-spanning segment. The Cytoplasmic portion of the chain corresponds to 225 to 252 (RLVCTVKAAAAQQQESETTQRAEREVTR). The helical transmembrane segment at 253–274 (MVVIMVIGFLICWLPYASVALY) threads the bilayer. The Extracellular segment spans residues 275–286 (IFNNQGSEFGPV). The chain crosses the membrane as a helical span at residues 287–308 (FMTIPSFFAKSSALYNPLIYIL). Lys-296 is modified (N6-(retinylidene)lysine). At 309–354 (MNKQFRNCMITTLCCGKNPFEEEESTSASASKTEASSVSSSQVSPA) the chain is on the cytoplasmic side. Residues Cys-322 and Cys-323 are each lipidated (S-palmitoyl cysteine). Residues 333 to 354 (STSASASKTEASSVSSSQVSPA) are disordered. Over residues 334 to 354 (TSASASKTEASSVSSSQVSPA) the composition is skewed to low complexity.

The protein belongs to the G-protein coupled receptor 1 family. Opsin subfamily. Post-translationally, phosphorylated on some or all of the serine and threonine residues present in the C-terminal region. In terms of processing, contains one covalently linked retinal chromophore.

Its subcellular location is the membrane. It is found in the cell projection. The protein resides in the cilium. It localises to the photoreceptor outer segment. Photoreceptor required for image-forming vision at low light intensity. While most salt water fish species use retinal as chromophore, most freshwater fish use 3-dehydroretinal, or a mixture of retinal and 3-dehydroretinal. Light-induced isomerization of 11-cis to all-trans retinal triggers a conformational change that activates signaling via G-proteins. Subsequent receptor phosphorylation mediates displacement of the bound G-protein alpha subunit by arrestin and terminates signaling. The chain is Rhodopsin (rho) from Galeus melastomus (Blackmouth catshark).